We begin with the raw amino-acid sequence, 720 residues long: Dedicator of cytokinesis protein 9 (720 aa).

The DOCKER domain maps to 186 to 638; that stretch reads KSYASTPELR…LSDIIVPRIC (453 aa). The segment at 277–638 is interaction with CDC42; the sequence is DEEASMMEDV…LSDIIVPRIC (362 aa).

The protein belongs to the DOCK family. Homodimer. Interacts preferentially with nucleotide-depleted CDC42.

The protein localises to the endomembrane system. Guanine nucleotide-exchange factor (GEF) that activates CDC42 by exchanging bound GDP for free GTP. Overexpression induces filopodia formation. This chain is Dedicator of cytokinesis protein 9 (Dock9), found in Rattus norvegicus (Rat).